A 135-amino-acid chain; its full sequence is Fatty acid-binding protein homolog 6 (135 aa).

A fatty acid is bound by residues arginine 110 and 130–132 (REY).

It belongs to the calycin superfamily. Fatty-acid binding protein (FABP) family.

The sequence is that of Fatty acid-binding protein homolog 6 (lbp-6) from Caenorhabditis elegans.